Here is a 485-residue protein sequence, read N- to C-terminus: MDFSSTRVLCIGDVMLDRFMHGSVERISPEAPVPVLRITSTHSMLGGAGNVAHNIADLGGTAILVGLIGHDDTAIALRTHLERVPGIVNALVESPHRPTICKTRFLAAQQQVVRTDDESHLPTQPAEEMLLQTMVATHITECGAVILSDYGKGVLSPAVIKHVIGLARQAGIPVFVDPKRLDFSVYAGATCITPNVKELSAAAHQRADDEASVIAAARIVMQQAEGASILATRSEKGMMLIEAPAEGRDDIAIHTVPARAREVFDVSGAGDTVIATLALAHASGLTLESAMRISNAAAGVVVSKAGTATLNVDELRAELDESAISNGSTGSARSLGEARSLVKKWKQLGLTVGFTNGCFDILHAGHVSLLNEARTRCDRLIVAVNTDASVSRLKGPTRPINGFEDRCTVLAGLRSVDCVVGFQEDTPLSVISVLLPDRLFKGADYREEDVVGGDVVRAAGGKVELIDLVPGRSTTGIVKKISTLT.

The interval Met-1–Asn-326 is ribokinase. ATP is bound at residue Asn-195–Glu-198. The active site involves Asp-271. The segment at Phe-354–Thr-485 is cytidylyltransferase.

The protein in the N-terminal section; belongs to the carbohydrate kinase PfkB family. This sequence in the C-terminal section; belongs to the cytidylyltransferase family. As to quaternary structure, homodimer.

It carries out the reaction D-glycero-beta-D-manno-heptose 7-phosphate + ATP = D-glycero-beta-D-manno-heptose 1,7-bisphosphate + ADP + H(+). The catalysed reaction is D-glycero-beta-D-manno-heptose 1-phosphate + ATP + H(+) = ADP-D-glycero-beta-D-manno-heptose + diphosphate. Its pathway is nucleotide-sugar biosynthesis; ADP-L-glycero-beta-D-manno-heptose biosynthesis; ADP-L-glycero-beta-D-manno-heptose from D-glycero-beta-D-manno-heptose 7-phosphate: step 1/4. It participates in nucleotide-sugar biosynthesis; ADP-L-glycero-beta-D-manno-heptose biosynthesis; ADP-L-glycero-beta-D-manno-heptose from D-glycero-beta-D-manno-heptose 7-phosphate: step 3/4. Catalyzes the phosphorylation of D-glycero-D-manno-heptose 7-phosphate at the C-1 position to selectively form D-glycero-beta-D-manno-heptose-1,7-bisphosphate. Its function is as follows. Catalyzes the ADP transfer from ATP to D-glycero-beta-D-manno-heptose 1-phosphate, yielding ADP-D-glycero-beta-D-manno-heptose. In Granulibacter bethesdensis (strain ATCC BAA-1260 / CGDNIH1), this protein is Bifunctional protein HldE.